The chain runs to 483 residues: Protein nucleotidyltransferase YdiU (483 aa).

Residues Gly-87, Gly-89, Arg-90, Lys-110, Asp-122, Gly-123, Arg-173, and Arg-180 each contribute to the ATP site. The Proton acceptor role is filled by Asp-249. Mg(2+)-binding residues include Asn-250 and Asp-259. Asp-259 provides a ligand contact to ATP.

Belongs to the SELO family. Mg(2+) is required as a cofactor. Mn(2+) serves as cofactor.

The enzyme catalyses L-seryl-[protein] + ATP = 3-O-(5'-adenylyl)-L-seryl-[protein] + diphosphate. It catalyses the reaction L-threonyl-[protein] + ATP = 3-O-(5'-adenylyl)-L-threonyl-[protein] + diphosphate. The catalysed reaction is L-tyrosyl-[protein] + ATP = O-(5'-adenylyl)-L-tyrosyl-[protein] + diphosphate. It carries out the reaction L-histidyl-[protein] + UTP = N(tele)-(5'-uridylyl)-L-histidyl-[protein] + diphosphate. The enzyme catalyses L-seryl-[protein] + UTP = O-(5'-uridylyl)-L-seryl-[protein] + diphosphate. It catalyses the reaction L-tyrosyl-[protein] + UTP = O-(5'-uridylyl)-L-tyrosyl-[protein] + diphosphate. In terms of biological role, nucleotidyltransferase involved in the post-translational modification of proteins. It can catalyze the addition of adenosine monophosphate (AMP) or uridine monophosphate (UMP) to a protein, resulting in modifications known as AMPylation and UMPylation. This is Protein nucleotidyltransferase YdiU from Yersinia pseudotuberculosis serotype O:1b (strain IP 31758).